The sequence spans 82 residues: ATP synthase subunit 9, mitochondrial (82 aa).

The next 2 helical transmembrane spans lie at 8 to 28 (IGAGAATIASAGAAIGIGNVF) and 45 to 67 (SFGYAILGFALTEAIASFAPMMA).

It belongs to the ATPase C chain family. In terms of assembly, F-type ATPases have 2 components, CF(1) - the catalytic core - and CF(0) - the membrane proton channel. CF(1) has five subunits: alpha(3), beta(3), gamma(1), delta(1), epsilon(1). CF(0) has three main subunits: a, b and c.

The protein resides in the mitochondrion membrane. This protein is one of the chains of the nonenzymatic membrane component (F0) of mitochondrial ATPase. This Malus domestica (Apple) protein is ATP synthase subunit 9, mitochondrial (ATP9).